The chain runs to 156 residues: Transcription antitermination protein NusB (156 aa).

It belongs to the NusB family.

In terms of biological role, involved in transcription antitermination. Required for transcription of ribosomal RNA (rRNA) genes. Binds specifically to the boxA antiterminator sequence of the ribosomal RNA (rrn) operons. The polypeptide is Transcription antitermination protein NusB (Clostridium kluyveri (strain ATCC 8527 / DSM 555 / NBRC 12016 / NCIMB 10680 / K1)).